Here is a 450-residue protein sequence, read N- to C-terminus: ATP-dependent protease ATPase subunit HslU (450 aa).

ATP is bound by residues V29, 71 to 76 (GVGKTE), D261, E328, and R400.

This sequence belongs to the ClpX chaperone family. HslU subfamily. A double ring-shaped homohexamer of HslV is capped on each side by a ring-shaped HslU homohexamer. The assembly of the HslU/HslV complex is dependent on binding of ATP.

Its subcellular location is the cytoplasm. Functionally, ATPase subunit of a proteasome-like degradation complex; this subunit has chaperone activity. The binding of ATP and its subsequent hydrolysis by HslU are essential for unfolding of protein substrates subsequently hydrolyzed by HslV. HslU recognizes the N-terminal part of its protein substrates and unfolds these before they are guided to HslV for hydrolysis. This chain is ATP-dependent protease ATPase subunit HslU, found in Rickettsia felis (strain ATCC VR-1525 / URRWXCal2) (Rickettsia azadi).